Consider the following 20-residue polypeptide: Collagenolytic protease 28 kDa (20 aa).

One can recognise a Peptidase S1 domain in the interval 1-20; it reads IVGGQEASPGSWPXQVGLFF.

It belongs to the peptidase S1 family.

The enzyme catalyses Hydrolysis of proteins, with broad specificity for peptide bonds. Native collagen is cleaved about 75% of the length of the molecule from the N-terminus. Low activity on small molecule substrates of both trypsin and chymotrypsin.. Functionally, this enzyme is a serine protease capable of degrading the native triple helix of collagen. The chain is Collagenolytic protease 28 kDa from Paralithodes camtschaticus (Red king crab).